The following is a 263-amino-acid chain: MEIAFDLSSIFTDNIQRLEKADLLKYSPKQYWAVAKSIDTLGEMSSKFHGWKRIITMYEKIIDHDEDQTVYILWDKVDGNKSVLKGILRVGYKTLYLTDNEQNQYMEKAMCILDFFIVPTEQRSGNGFNMFDAMLKAENVLVEQCAFDKPSAALRQFLEKYYDQKEPVMQSNKYAVFPNFFIGRHPTVPFTPRQTKRASRASSAVSSHTTSRNTSPIGRNRPRHDSVADLMRQDNFPRGRSVIDPNSPAGFKLTRDQRHEPIW.

One can recognise an N-acetyltransferase domain in the interval Met1–Phe181. An acetyl-CoA-binding site is contributed by Phe115–Phe128. Disordered regions lie at residues Thr191–His224 and Phe236–Trp263. The segment covering Arg200–Arg212 has biased composition (low complexity). The segment covering Leu253–Trp263 has biased composition (basic and acidic residues).

This sequence belongs to the acetyltransferase ATAT1 family.

The catalysed reaction is L-lysyl-[alpha-tubulin] + acetyl-CoA = N(6)-acetyl-L-lysyl-[alpha-tubulin] + CoA + H(+). Its function is as follows. Specifically acetylates 'Lys-40' in alpha-tubulin/mec-12 on the lumenal side of microtubules. Promotes microtubule destabilization and accelerates microtubule dynamics; this activity may be independent of acetylation activity. Acetylates alpha-tubulin with a slow enzymatic rate, due to a catalytic site that is not optimized for acetyl transfer. Enters the microtubule through each end and diffuses quickly throughout the lumen of microtubules. Acetylates only long/old microtubules because of its slow acetylation rate since it does not have time to act on dynamically unstable microtubules before the enzyme is released. Required for the maintenance of touch receptor neurons and possibly other type of neurons involved in locomotion. This chain is Alpha-tubulin N-acetyltransferase 2 (atat-2), found in Caenorhabditis briggsae.